Consider the following 211-residue polypeptide: MADS-box protein AGL72 (211 aa).

The MADS-box domain maps to methionine 1–aspartate 61. A K-box domain is found at valine 88 to glycine 187.

The protein resides in the nucleus. Its function is as follows. MADS-box transcription factor that acts with AGL42 and AGL71 in the control of flowering time. Promotes flowering at the shoot apical and axillary meristems. Seems to act through a gibberellin-dependent pathway. Interacts genetically with SOC1 and its expression is directly regulated by SOC1. This chain is MADS-box protein AGL72 (AGL72), found in Arabidopsis thaliana (Mouse-ear cress).